A 495-amino-acid polypeptide reads, in one-letter code: Glutamate--tRNA ligase (495 aa).

Positions proline 12 to asparagine 22 match the 'HIGH' region motif. The short motif at lysine 259–arginine 263 is the 'KMSKS' region element. Lysine 262 is an ATP binding site.

The protein belongs to the class-I aminoacyl-tRNA synthetase family. Glutamate--tRNA ligase type 1 subfamily. Monomer.

The protein resides in the cytoplasm. It catalyses the reaction tRNA(Glu) + L-glutamate + ATP = L-glutamyl-tRNA(Glu) + AMP + diphosphate. In terms of biological role, catalyzes the attachment of glutamate to tRNA(Glu) in a two-step reaction: glutamate is first activated by ATP to form Glu-AMP and then transferred to the acceptor end of tRNA(Glu). The protein is Glutamate--tRNA ligase of Latilactobacillus sakei subsp. sakei (strain 23K) (Lactobacillus sakei subsp. sakei).